We begin with the raw amino-acid sequence, 594 residues long: 3-hydroxy-3-methylglutaryl coenzyme A reductase 2-A (594 aa).

Residues 1-32 form a disordered region; sequence MDVRRRPVKSLSSAKTATAGEPPKSQQQHPKA. At 1 to 37 the chain is on the lumenal side; it reads MDVRRRPVKSLSSAKTATAGEPPKSQQQHPKASDALP. The chain crosses the membrane as a helical span at residues 38–58; that stretch reads LPLYLTNGLFFTMFFSVMYFL. Residues 59–81 lie on the Cytoplasmic side of the membrane; it reads LHRWREKIRNSTPLHVVTLSELA. A helical membrane pass occupies residues 82–102; that stretch reads ALVLLMASVIYLLGFFGIGFV. Over 103-549 the chain is Lumenal; the sequence is RSVIRPSPDA…SKESPGSNSR (447 aa). Residue N261 is glycosylated (N-linked (GlcNAc...) asparagine). E273 functions as the Charge relay system in the catalytic mechanism. N337 carries N-linked (GlcNAc...) asparagine glycosylation. Active-site charge relay system residues include K405 and D481. Residues 550 to 570 traverse the membrane as a helical segment; that stretch reads LLASIVAGSVLAGELSLMSAL. At 571 to 594 the chain is on the cytoplasmic side; it reads AAGQLVKSHMKYNRSSKDITKLSS. The active-site Proton donor is the H579.

It belongs to the HMG-CoA reductase family. In terms of tissue distribution, mostly expressed in the petioles of seedlings, seedlings and roots, and, to a lower extent, in seeds, leaves, stems and flowers.

It localises to the endoplasmic reticulum membrane. The protein resides in the plastid. It is found in the chloroplast membrane. Its subcellular location is the peroxisome membrane. It carries out the reaction (R)-mevalonate + 2 NADP(+) + CoA = (3S)-3-hydroxy-3-methylglutaryl-CoA + 2 NADPH + 2 H(+). It participates in metabolic intermediate biosynthesis; (R)-mevalonate biosynthesis; (R)-mevalonate from acetyl-CoA: step 3/3. Its activity is regulated as follows. Competitive inhibition by mevinolin (Mev) is leading to a significant reduction of total ginsenoside in adventitious roots. Triggered by darkness. In terms of biological role, catalyzes the synthesis of mevalonate, the specific precursor of all isoprenoid compounds present in plants. Component of the triterpene saponins (e.g. ginsenosides or panaxosides) and phytosterols biosynthetic pathways. The protein is 3-hydroxy-3-methylglutaryl coenzyme A reductase 2-A of Panax ginseng (Korean ginseng).